Consider the following 374-residue polypeptide: Cytochrome b (374 aa).

The next 4 membrane-spanning stretches (helical) occupy residues 25–45, 69–90, 105–125, and 170–190; these read FGSM…FLAI, WIIQ…YMHI, WLSG…GYVL, and FFAL…IHII. Heme b is bound by residues H75 and H89. Positions 174 and 188 each coordinate heme b. H193 is a binding site for a ubiquinone. Helical transmembrane passes span 218-238, 280-300, 312-332, and 339-358; these read YKDM…LSFT, LGGA…PFTH, LAQI…WTAT, and FITI…MINP.

This sequence belongs to the cytochrome b family. As to quaternary structure, the cytochrome bc1 complex contains 3 respiratory subunits (MT-CYB, CYC1 and UQCRFS1), 2 core proteins (UQCRC1 and UQCRC2) and probably 6 low-molecular weight proteins. Requires heme b as cofactor.

The protein localises to the mitochondrion inner membrane. In terms of biological role, component of the ubiquinol-cytochrome c reductase complex (complex III or cytochrome b-c1 complex) that is part of the mitochondrial respiratory chain. The b-c1 complex mediates electron transfer from ubiquinol to cytochrome c. Contributes to the generation of a proton gradient across the mitochondrial membrane that is then used for ATP synthesis. This is Cytochrome b (MT-CYB) from Calliophis bivirgatus (Blue Malaysian coral snake).